Reading from the N-terminus, the 459-residue chain is Phosphoglucosamine mutase (459 aa).

Ser100 serves as the catalytic Phosphoserine intermediate. 4 residues coordinate Mg(2+): Ser100, Asp256, Asp258, and Asp260. Ser100 carries the phosphoserine modification.

Belongs to the phosphohexose mutase family. Mg(2+) serves as cofactor. Post-translationally, activated by phosphorylation.

The enzyme catalyses alpha-D-glucosamine 1-phosphate = D-glucosamine 6-phosphate. In terms of biological role, catalyzes the conversion of glucosamine-6-phosphate to glucosamine-1-phosphate. The polypeptide is Phosphoglucosamine mutase (Heliobacterium modesticaldum (strain ATCC 51547 / Ice1)).